A 121-amino-acid chain; its full sequence is Large ribosomal subunit protein eL18 (121 aa).

This sequence belongs to the eukaryotic ribosomal protein eL18 family.

The polypeptide is Large ribosomal subunit protein eL18 (Methanothermobacter thermautotrophicus (strain ATCC 29096 / DSM 1053 / JCM 10044 / NBRC 100330 / Delta H) (Methanobacterium thermoautotrophicum)).